The primary structure comprises 159 residues: MSQAWVPGLAPTLLFSLLAGPQKIAAKCGLILACPKGFKCCGDSCCQENELFPGPVRIFVIIFLVILSVFCICGLAKCFCRNCREPEPDSPVDCRGPLELPSIIPPERVRVSLSAPPPPYSEVILKPSLGPTPTEPPPPYSFRPEEYTGDQRGIDNPAF.

An N-terminal signal peptide occupies residues 1–26 (MSQAWVPGLAPTLLFSLLAGPQKIAA). At 27-57 (KCGLILACPKGFKCCGDSCCQENELFPGPVR) the chain is on the extracellular side. The helical transmembrane segment at 58–78 (IFVIIFLVILSVFCICGLAKC) threads the bilayer. Residues 79–159 (FCRNCREPEP…DQRGIDNPAF (81 aa)) lie on the Cytoplasmic side of the membrane. The segment at 122–159 (EVILKPSLGPTPTEPPPPYSFRPEEYTGDQRGIDNPAF) is disordered.

Its subcellular location is the membrane. This Homo sapiens (Human) protein is Transmembrane protein 92 (TMEM92).